Consider the following 115-residue polypeptide: U3-lycotoxin-Ls1a (115 aa).

Positions 1-20 are cleaved as a signal peptide; sequence MKFVLLFGVLLVTLFSYSSA. Positions 21–44 are excised as a propeptide; the sequence is EMLDDFDQADEDELLSSIEKEEAR. 4 disulfides stabilise this stretch: Cys-48/Cys-63, Cys-55/Cys-72, Cys-62/Cys-87, and Cys-74/Cys-85.

It belongs to the neurotoxin 19 (CSTX) family. 01 subfamily. In terms of tissue distribution, expressed by the venom gland.

It localises to the secreted. In Lycosa singoriensis (Wolf spider), this protein is U3-lycotoxin-Ls1a.